A 474-amino-acid polypeptide reads, in one-letter code: ATP synthase subunit beta (474 aa).

Residue 152 to 159 participates in ATP binding; that stretch reads GGAGVGKT.

The protein belongs to the ATPase alpha/beta chains family. In terms of assembly, F-type ATPases have 2 components, CF(1) - the catalytic core - and CF(0) - the membrane proton channel. CF(1) has five subunits: alpha(3), beta(3), gamma(1), delta(1), epsilon(1). CF(0) has four main subunits: a(1), b(1), b'(1) and c(9-12).

The protein localises to the cell inner membrane. The enzyme catalyses ATP + H2O + 4 H(+)(in) = ADP + phosphate + 5 H(+)(out). Functionally, produces ATP from ADP in the presence of a proton gradient across the membrane. The catalytic sites are hosted primarily by the beta subunits. This is ATP synthase subunit beta from Rhodospirillum rubrum (strain ATCC 11170 / ATH 1.1.1 / DSM 467 / LMG 4362 / NCIMB 8255 / S1).